A 564-amino-acid polypeptide reads, in one-letter code: Kelch repeat and BTB domain-containing protein 1 (564 aa).

A BTB domain is found at 21-88 (CDINIVINDE…IYGIPLSLTN (68 aa)). Residues 123-219 (CIDFYIYADK…SLLSPQVIKS (97 aa)) enclose the BACK domain. Kelch repeat units follow at residues 252–297 (IELI…VLDN), 298–346 (IIYM…ADDE), 347–395 (YIYC…MLNG), 397–441 (IYVI…VHDG), 442–492 (KIYI…SAHN), and 494–539 (LYVG…CEPI).

Interacts (via BTB domain) with host CUL3.

Its subcellular location is the host cytoplasm. Functionally, probable substrate-specific adapter of CUL3-containing E3 ubiquitin-protein ligases which mediate the ubiquitination and subsequent proteasomal degradation of host target proteins. This chain is Kelch repeat and BTB domain-containing protein 1 (KBTB1), found in Cowpox virus (strain GRI-90 / Grishak) (CPV).